The chain runs to 911 residues: FIGNL1-interacting regulator of recombination and mitosis (911 aa).

The disordered stretch occupies residues 830–853 (SEKSQPAQTPLTEEPCAKRARQET). Residues 844-853 (PCAKRARQET) are compositionally biased toward basic and acidic residues.

The protein localises to the chromosome. It is found in the centromere. It localises to the kinetochore. Its subcellular location is the nucleus. The protein resides in the midbody. The protein localises to the cytoplasm. It is found in the cytoskeleton. It localises to the spindle. Its function is as follows. May play a role in chromosome segregation. This Danio rerio (Zebrafish) protein is FIGNL1-interacting regulator of recombination and mitosis.